A 100-amino-acid chain; its full sequence is Urease subunit gamma (100 aa).

This sequence belongs to the urease gamma subunit family. As to quaternary structure, heterotrimer of UreA (gamma), UreB (beta) and UreC (alpha) subunits. Three heterotrimers associate to form the active enzyme.

It is found in the cytoplasm. The enzyme catalyses urea + 2 H2O + H(+) = hydrogencarbonate + 2 NH4(+). It participates in nitrogen metabolism; urea degradation; CO(2) and NH(3) from urea (urease route): step 1/1. The protein is Urease subunit gamma of Rhodopseudomonas palustris (strain BisA53).